We begin with the raw amino-acid sequence, 469 residues long: MAQTLYDKLWNSHVVHTEEDGTALLYIDRQLLHEVTSPQAFEGLKLAQRPVWRISANLAVSDHNVPTTDRSHGIADPVSKLQVDTLDANCDAYGITQFKMNDVRQGIVHIIGPEQGATLPGMTIVCGDSHTSTHGAFGALAHGIGTSEVEHVLATQTLLQKKSKNMLVKVEGQLPRGCTAKDIVLAIIGRIGTAGGTGYAIEFGGSTIRALTMEGRMTVCNMAIEAGARAGMVAVDDTTVEYLKGRPFVPTGAEWDQAVEYWKTFRSDEGAQFDRVVELDAAQIVPQVTWGTSPEMVTSIDGRVPDPEREKDPVKRDAMERALAYMALAPNTPIEAIKVDKIFIGSCTNARIEDIRAAAYVVKKLNRRVAPNVRLAMVVPGSGLVKAQAEREGLDKVFTEAGFEWREPGCSMCLAMNADRLEPGERCASTSNRNFEGRQGQGGRTHLVSPAMAAAAAIEGHFVDIRRLG.

Residues C347, C410, and C413 each coordinate [4Fe-4S] cluster.

This sequence belongs to the aconitase/IPM isomerase family. LeuC type 1 subfamily. Heterodimer of LeuC and LeuD. The cofactor is [4Fe-4S] cluster.

The catalysed reaction is (2R,3S)-3-isopropylmalate = (2S)-2-isopropylmalate. It functions in the pathway amino-acid biosynthesis; L-leucine biosynthesis; L-leucine from 3-methyl-2-oxobutanoate: step 2/4. In terms of biological role, catalyzes the isomerization between 2-isopropylmalate and 3-isopropylmalate, via the formation of 2-isopropylmaleate. This is 3-isopropylmalate dehydratase large subunit from Burkholderia pseudomallei (strain 1106a).